Here is a 217-residue protein sequence, read N- to C-terminus: Imidazole glycerol phosphate synthase subunit HisH (217 aa).

A Glutamine amidotransferase type-1 domain is found at 3–217; that stretch reads TIAIVDYGMG…IYRNFVHWKP (215 aa). Cysteine 82 acts as the Nucleophile in catalysis. Active-site residues include histidine 197 and glutamate 199.

As to quaternary structure, heterodimer of HisH and HisF.

The protein resides in the cytoplasm. The catalysed reaction is 5-[(5-phospho-1-deoxy-D-ribulos-1-ylimino)methylamino]-1-(5-phospho-beta-D-ribosyl)imidazole-4-carboxamide + L-glutamine = D-erythro-1-(imidazol-4-yl)glycerol 3-phosphate + 5-amino-1-(5-phospho-beta-D-ribosyl)imidazole-4-carboxamide + L-glutamate + H(+). The enzyme catalyses L-glutamine + H2O = L-glutamate + NH4(+). The protein operates within amino-acid biosynthesis; L-histidine biosynthesis; L-histidine from 5-phospho-alpha-D-ribose 1-diphosphate: step 5/9. IGPS catalyzes the conversion of PRFAR and glutamine to IGP, AICAR and glutamate. The HisH subunit catalyzes the hydrolysis of glutamine to glutamate and ammonia as part of the synthesis of IGP and AICAR. The resulting ammonia molecule is channeled to the active site of HisF. The sequence is that of Imidazole glycerol phosphate synthase subunit HisH from Ralstonia nicotianae (strain ATCC BAA-1114 / GMI1000) (Ralstonia solanacearum).